Here is a 557-residue protein sequence, read N- to C-terminus: Dihydroxy-acid dehydratase (557 aa).

A Mg(2+)-binding site is contributed by D78. A [2Fe-2S] cluster-binding site is contributed by C119. The Mg(2+) site is built by D120 and K121. K121 carries the N6-carboxylysine modification. C192 is a binding site for [2Fe-2S] cluster. E442 provides a ligand contact to Mg(2+). The Proton acceptor role is filled by S468.

The protein belongs to the IlvD/Edd family. As to quaternary structure, homodimer. [2Fe-2S] cluster serves as cofactor. Mg(2+) is required as a cofactor.

The enzyme catalyses (2R)-2,3-dihydroxy-3-methylbutanoate = 3-methyl-2-oxobutanoate + H2O. It carries out the reaction (2R,3R)-2,3-dihydroxy-3-methylpentanoate = (S)-3-methyl-2-oxopentanoate + H2O. It participates in amino-acid biosynthesis; L-isoleucine biosynthesis; L-isoleucine from 2-oxobutanoate: step 3/4. It functions in the pathway amino-acid biosynthesis; L-valine biosynthesis; L-valine from pyruvate: step 3/4. Functionally, functions in the biosynthesis of branched-chain amino acids. Catalyzes the dehydration of (2R,3R)-2,3-dihydroxy-3-methylpentanoate (2,3-dihydroxy-3-methylvalerate) into 2-oxo-3-methylpentanoate (2-oxo-3-methylvalerate) and of (2R)-2,3-dihydroxy-3-methylbutanoate (2,3-dihydroxyisovalerate) into 2-oxo-3-methylbutanoate (2-oxoisovalerate), the penultimate precursor to L-isoleucine and L-valine, respectively. The protein is Dihydroxy-acid dehydratase of Bacillus thuringiensis subsp. konkukian (strain 97-27).